The following is a 289-amino-acid chain: Bidirectional sugar transporter SWEET15 (289 aa).

Topologically, residues 1-10 (MAMAMANHHT) are extracellular. A helical transmembrane segment spans residues 11-31 (LGLIFGILGNIISFLVYFAPA). The region spanning 14–100 (IFGILGNIIS…LYFFYAPMQA (87 aa)) is the MtN3/slv 1 domain. Residues 32-45 (PTFYRIYKRKSAEG) are Cytoplasmic-facing. A helical transmembrane segment spans residues 46–66 (FHSLPYIVALFSAMLWLYYAL). Residues 67-70 (LKKD) lie on the Extracellular side of the membrane. Residues 71 to 91 (AFLLITINSFGCAIESFYILL) form a helical membrane-spanning segment. The Cytoplasmic segment spans residues 92–106 (YFFYAPMQAKKQTLK). The helical transmembrane segment at 107 to 127 (VVISLNVGVFSILVVLIQFLL) threads the bilayer. Residues 128-134 (KGSNRIN) lie on the Extracellular side of the membrane. Residues 135 to 155 (VFGWICASFSVAVFAAPLSIV) form a helical membrane-spanning segment. One can recognise a MtN3/slv 2 domain in the interval 136–219 (FGWICASFSV…VLYGFYRNAG (84 aa)). Residues 156–167 (AKVIRTKSVEFM) are Cytoplasmic-facing. Residues 168–188 (PFSLSFFLTLSAIMWFAYGLL) form a helical membrane-spanning segment. At 189–193 (KNDPC) the chain is on the extracellular side. Residues 194-214 (VAIPNILGVILGLVQMVLYGF) form a helical membrane-spanning segment. Over 215–289 (YRNAGKEKME…GELQPNGSTV (75 aa)) the chain is Cytoplasmic. The tract at residues 249–289 (GAQQNGIKKSGSEDVKDDEETGNREKSTENSGELQPNGSTV) is disordered. A compositionally biased stretch (polar residues) spans 277–289 (ENSGELQPNGSTV).

This sequence belongs to the SWEET sugar transporter family. In terms of assembly, forms homooligomers and/or heterooligomers.

It is found in the cell membrane. Its function is as follows. Mediates both low-affinity uptake and efflux of sugar across the plasma membrane. The polypeptide is Bidirectional sugar transporter SWEET15 (Vitis vinifera (Grape)).